The following is a 213-amino-acid chain: Small ribosomal subunit protein uS4 (213 aa).

Positions 97–165 constitute an S4 RNA-binding domain; that stretch reads RRLDNVVYRM…AKEQLRIKNA (69 aa).

This sequence belongs to the universal ribosomal protein uS4 family. Part of the 30S ribosomal subunit. Contacts protein S5. The interaction surface between S4 and S5 is involved in control of translational fidelity.

In terms of biological role, one of the primary rRNA binding proteins, it binds directly to 16S rRNA where it nucleates assembly of the body of the 30S subunit. Its function is as follows. With S5 and S12 plays an important role in translational accuracy. This chain is Small ribosomal subunit protein uS4, found in Psychrobacter sp. (strain PRwf-1).